Reading from the N-terminus, the 138-residue chain is Thyrotropin subunit beta (138 aa).

The first 20 residues, 1–20 (MNAVVLFSVLFALACGQVSS), serve as a signal peptide directing secretion. 6 disulfides stabilise this stretch: C22–C72, C36–C87, C39–C125, C47–C103, C51–C105, and C108–C115. The N-linked (GlcNAc...) asparagine glycan is linked to N43. The propeptide occupies 133–138 (LGGFSG).

This sequence belongs to the glycoprotein hormones subunit beta family. Heterodimer of a common alpha chain and a unique beta chain which confers biological specificity to thyrotropin, lutropin, follitropin and gonadotropin.

It is found in the secreted. In terms of biological role, indispensable for the control of thyroid structure and metabolism. The chain is Thyrotropin subunit beta (Tshb) from Rattus norvegicus (Rat).